Reading from the N-terminus, the 354-residue chain is Bacteriochlorophyll a protein (354 aa).

Bacteriochlorophyll a contacts are provided by H99, H134, H278, H285, and H286.

As to quaternary structure, homotrimer. Each subunit contains 7 molecules of bacteriochlorophyll a.

Functionally, intermediary in the transfer of excitation energy from the chlorophyll to the reaction centers. The polypeptide is Bacteriochlorophyll a protein (fmoA) (Chlorobaculum thiosulfatiphilum (Chlorobium limicola f.sp. thiosulfatophilum)).